The sequence spans 217 residues: Large ribosomal subunit protein uL3 (217 aa).

This sequence belongs to the universal ribosomal protein uL3 family. In terms of assembly, part of the 50S ribosomal subunit. Forms a cluster with proteins L14 and L19.

In terms of biological role, one of the primary rRNA binding proteins, it binds directly near the 3'-end of the 23S rRNA, where it nucleates assembly of the 50S subunit. The protein is Large ribosomal subunit protein uL3 of Mycobacterium marinum (strain ATCC BAA-535 / M).